The primary structure comprises 245 residues: MNVTLLIPARYGSSRFPGKPLAPINGKPMIQHVYERASLAKGLTNIYVATDDDRIKAAVEGFGGKVVMTSPEAASGTDRINDAINQLGLKDDDLVINLQGDQPLIDPTSIEQVISLFERHPGEFEMATLGFEIVNKTELDDPMHVKMVFDNNNYALYFSRSRIPFGRDTQDYPVYKHLGVYAYTRKFVQAFAALPLGRLEDLEKLEQLRALEYGHKIKIAISAFDSIEVDTPEDIRKCEQRLAVD.

This sequence belongs to the KdsB family.

Its subcellular location is the cytoplasm. It carries out the reaction 8-amino-3,8-dideoxy-alpha-D-manno-octulosonate + CTP = CMP-8-amino-3,8-dideoxy-alpha-D-manno-oct-2-ulosonate + diphosphate. The protein operates within bacterial outer membrane biogenesis; lipopolysaccharide biosynthesis. Functionally, activates KDO8N (a required 8-carbon sugar) for incorporation into bacterial lipopolysaccharide in the Shewanella genus. The protein is 8-amino-3,8-dideoxy-manno-octulosonate cytidylyltransferase of Shewanella baltica (strain OS185).